A 133-amino-acid polypeptide reads, in one-letter code: MAKLETVTLGNIGKDGKQTLVLNPRGVNPTNGVASLSQAGAVPALEKRVTVSVSQPSRNRKNYKVQVKIQNPTACTANGSCDPSVTRQAYADVTFSFTQYSTDEERAFVRTELAALLASPLLIDAIDQLNPAY.

The protein belongs to the Leviviricetes capsid protein family. Homodimer. The homodimers binds to the viral RNA via an operator hairpin, but also to many other RNA sequences in the viral genome; this interaction probably shifts the virus from the replicative to the assembly phase and ensures specific encapsidation of the viral genome. Interacts with the maturation protein A2.

It is found in the virion. Capsid protein self-assembles to form an icosahedral capsid with a T=3 symmetry, about 26 nm in diameter, and consisting of 89 capsid proteins dimers (178 capsid proteins). Involved in viral genome encapsidation through the interaction between a capsid protein dimer and the multiple packaging signals present in the RNA genome. Binding of the capsid proteins to the viral RNA induces a conformational change required for efficient T=3 shell formation. The capsid also contains 1 copy of the A2 maturation protein. Functionally, acts as a translational repressor of viral replicase synthesis late in infection. This latter function is the result of capsid protein interaction with an RNA hairpin which contains the replicase ribosome-binding site. The chain is Capsid protein from Escherichia virus Qbeta (Bacteriophage Q-beta).